A 585-amino-acid polypeptide reads, in one-letter code: L-gulonolactone oxidase 3 (585 aa).

The N-terminal stretch at 1-24 is a signal peptide; sequence MRYSHTLQQFSILSFFVTIWTVQS. The region spanning 51 to 233 is the FAD-binding PCMH-type domain; it reads KTCHAANVTY…SKVKLSIEKA (183 aa).

It belongs to the oxygen-dependent FAD-linked oxidoreductase family. Requires FAD as cofactor.

It localises to the vacuole. The enzyme catalyses L-gulono-1,4-lactone + O2 = L-ascorbate + H2O2 + H(+). It participates in cofactor biosynthesis; L-ascorbate biosynthesis. Functionally, catalyzes the oxidation of L-gulono-1,4-lactone to ascorbic acid. L-gulono-1,4-lactone is oxidized to hydrogen peroxide and L-xylo-hexulonolactone which spontaneously isomerizes to L-ascorbate. The polypeptide is L-gulonolactone oxidase 3 (Arabidopsis thaliana (Mouse-ear cress)).